The chain runs to 246 residues: Endonuclease V (246 aa).

Mg(2+)-binding residues include aspartate 50 and aspartate 120.

It belongs to the endonuclease V family. Requires Mg(2+) as cofactor.

The protein localises to the cytoplasm. The enzyme catalyses Endonucleolytic cleavage at apurinic or apyrimidinic sites to products with a 5'-phosphate.. Its function is as follows. DNA repair enzyme involved in the repair of deaminated bases. Selectively cleaves double-stranded DNA at the second phosphodiester bond 3' to a deoxyinosine leaving behind the intact lesion on the nicked DNA. The chain is Endonuclease V from Gloeobacter violaceus (strain ATCC 29082 / PCC 7421).